A 219-amino-acid polypeptide reads, in one-letter code: Phosphoribosylformylglycinamidine synthase subunit PurQ (219 aa).

Residues 2-219 form the Glutamine amidotransferase type-1 domain; it reads KIAVITFPGS…KVVLDLILGS (218 aa). C86 functions as the Nucleophile in the catalytic mechanism. Active-site residues include H195 and E197.

In terms of assembly, part of the FGAM synthase complex composed of 1 PurL, 1 PurQ and 2 PurS subunits.

It localises to the cytoplasm. It carries out the reaction N(2)-formyl-N(1)-(5-phospho-beta-D-ribosyl)glycinamide + L-glutamine + ATP + H2O = 2-formamido-N(1)-(5-O-phospho-beta-D-ribosyl)acetamidine + L-glutamate + ADP + phosphate + H(+). It catalyses the reaction L-glutamine + H2O = L-glutamate + NH4(+). The protein operates within purine metabolism; IMP biosynthesis via de novo pathway; 5-amino-1-(5-phospho-D-ribosyl)imidazole from N(2)-formyl-N(1)-(5-phospho-D-ribosyl)glycinamide: step 1/2. In terms of biological role, part of the phosphoribosylformylglycinamidine synthase complex involved in the purines biosynthetic pathway. Catalyzes the ATP-dependent conversion of formylglycinamide ribonucleotide (FGAR) and glutamine to yield formylglycinamidine ribonucleotide (FGAM) and glutamate. The FGAM synthase complex is composed of three subunits. PurQ produces an ammonia molecule by converting glutamine to glutamate. PurL transfers the ammonia molecule to FGAR to form FGAM in an ATP-dependent manner. PurS interacts with PurQ and PurL and is thought to assist in the transfer of the ammonia molecule from PurQ to PurL. The chain is Phosphoribosylformylglycinamidine synthase subunit PurQ from Leptospira interrogans serogroup Icterohaemorrhagiae serovar copenhageni (strain Fiocruz L1-130).